Consider the following 375-residue polypeptide: MSTLGRSKTPSRDEPKKPGVFEKLSGTLSRKKKAPEDEHGNQGGAHHATDEDEVLELELEGREALDQSLVPVLARNIWLEEGEIRRYLTKETARDQKLAQVVDLLIYWLNEELADQRIVVRHLQEDLFDGQIIQKLLEKLEQIRIEVPEVSQSEEGQRQKLQIVVQTANRILGQPREQEKWSADLIHQKDFTAIIQLLVLLALHYRAPVRFPDNVVANVVVAQKEHGQVKTHRITEQITTVQTELAPKGTRDAFDTLFDYGPDKLAHVKTSLLAFCNKHLNKINLEVSDLDNQFQDGVFLVLLVGLLEGYFVPLYHFNLQVQSHEEKVKNVQFAFKLMEDTGLEKPRSRVQDIANGDVKSTLRLLHLLFTKYKHI.

The tract at residues 1-51 is disordered; it reads MSTLGRSKTPSRDEPKKPGVFEKLSGTLSRKKKAPEDEHGNQGGAHHATDE. Positions 10–20 are enriched in basic and acidic residues; sequence PSRDEPKKPGV. 2 Calponin-homology (CH) domains span residues 99-206 and 266-373; these read AQVV…LHYR and AHVK…TKYK.

This sequence belongs to the parvin family. As to quaternary structure, may interact (via calponin-homology (CH) 2 domain) with pat-4 (via kinase domain). May form a complex with unc-112 and pat-4. Component of an integrin containing attachment complex, composed of at least pat-2, pat-3, pat-4, pat-6, unc-52, unc-97 and unc-112. As to expression, expressed from 1.5 stage embryos, mostly within the muscle cells. In adult hermaphrodites, expressed in the attachments of other muscles, including the uterine, anal depressor, anal sphincter, and vulval muscles, as well as in the spermatheca and the distal tip cells. Expressed in mechanosensory receptor neurons ALML/R, PLML/R, AVM, and PVM. Localizes at body wall muscle attachments.

It localises to the cytoplasm. The protein resides in the cytoskeleton. It is found in the myofibril. The protein localises to the sarcomere. Its subcellular location is the m line. It localises to the perikaryon. The protein resides in the cell projection. It is found in the axon. In terms of biological role, involved in the regulation of cell adhesion and cytoskeleton organization. Component of an integrin containing attachment complex, which is required for muscle development and maintenance. During embryonic development, required to recruit cpna-1, unc-89 and myofilaments to newly forming integrin attachments composed of integrins pat-2/pat-3, pat-4 and unc-112. Also required to reposition the integrin-based attachments so that they form the highly ordered array of dense body and M-line attachments that are characteristic of mature muscle cells. During the formation of neuromuscular junctions at the larval stage, negatively regulates membrane protrusion from body wall muscles. This chain is Paralyzed arrest at two-fold protein 6, found in Caenorhabditis elegans.